The sequence spans 189 residues: MPTRSRSKANQRRRRPRRVVVVAPSMAQPRTQSRRPRRRNKRGGGLNGSHTVDFSMVHGPFNGNATGTVKFGPSSDCQCIKGNLAAYQKYRIVWLKVVYQSEAAATDRGCIAYHVDTSTTKKAADVVLLDTWNIRSNGSATFGREILGDQPWYESNKDQFFFLYRGTGGTDVAGHYRISGRIQLMNASL.

2 stretches are compositionally biased toward basic residues: residues 1–18 (MPTR…RPRR) and 32–42 (QSRRPRRRNKR). Residues 1-50 (MPTRSRSKANQRRRRPRRVVVVAPSMAQPRTQSRRPRRRNKRGGGLNGSH) form a disordered region.

The protein belongs to the luteoviruses capsid protein family.

Its subcellular location is the virion. Its function is as follows. Major capsid protein. The sequence is that of Major capsid protein from Pea enation mosaic virus-1 (strain WSG) (PEMV-1).